Consider the following 72-residue polypeptide: Protein SlyX (72 aa).

This sequence belongs to the SlyX family.

The polypeptide is Protein SlyX (Cronobacter sakazakii (strain ATCC BAA-894) (Enterobacter sakazakii)).